Here is a 143-residue protein sequence, read N- to C-terminus: Nucleoside diphosphate kinase (143 aa).

Residues lysine 11, phenylalanine 59, arginine 87, threonine 93, arginine 104, and asparagine 114 each contribute to the ATP site. Histidine 117 (pros-phosphohistidine intermediate) is an active-site residue.

The protein belongs to the NDK family. In terms of assembly, homotetramer. Mg(2+) serves as cofactor.

The protein localises to the cytoplasm. The catalysed reaction is a 2'-deoxyribonucleoside 5'-diphosphate + ATP = a 2'-deoxyribonucleoside 5'-triphosphate + ADP. It catalyses the reaction a ribonucleoside 5'-diphosphate + ATP = a ribonucleoside 5'-triphosphate + ADP. In terms of biological role, major role in the synthesis of nucleoside triphosphates other than ATP. The ATP gamma phosphate is transferred to the NDP beta phosphate via a ping-pong mechanism, using a phosphorylated active-site intermediate. This Shewanella baltica (strain OS223) protein is Nucleoside diphosphate kinase.